A 188-amino-acid polypeptide reads, in one-letter code: 2-amino-4-hydroxy-6-hydroxymethyldihydropteridine pyrophosphokinase (188 aa).

This sequence belongs to the HPPK family.

It carries out the reaction 6-hydroxymethyl-7,8-dihydropterin + ATP = (7,8-dihydropterin-6-yl)methyl diphosphate + AMP + H(+). It participates in cofactor biosynthesis; tetrahydrofolate biosynthesis; 2-amino-4-hydroxy-6-hydroxymethyl-7,8-dihydropteridine diphosphate from 7,8-dihydroneopterin triphosphate: step 4/4. Catalyzes the transfer of pyrophosphate from adenosine triphosphate (ATP) to 6-hydroxymethyl-7,8-dihydropterin, an enzymatic step in folate biosynthesis pathway. The protein is 2-amino-4-hydroxy-6-hydroxymethyldihydropteridine pyrophosphokinase (folK) of Mycobacterium tuberculosis (strain ATCC 25618 / H37Rv).